Here is a 218-residue protein sequence, read N- to C-terminus: uncharacterized protein (218 aa).

Helical transmembrane passes span 9–29 (LLVI…VIAM), 42–62 (AIIL…SAAV), 67–87 (IPFL…QLLI), 107–127 (TIVL…AGAS), 134–154 (VVIG…LIHI), 159–179 (IPLL…EMIV), and 192–212 (GTVE…ASIY).

It belongs to the TerC family.

The protein resides in the cell membrane. This is an uncharacterized protein from Bacillus subtilis (strain 168).